The primary structure comprises 334 residues: Methionyl-tRNA formyltransferase (334 aa).

Residue 111–114 coordinates (6S)-5,6,7,8-tetrahydrofolate; it reads SLLP.

This sequence belongs to the Fmt family.

It catalyses the reaction L-methionyl-tRNA(fMet) + (6R)-10-formyltetrahydrofolate = N-formyl-L-methionyl-tRNA(fMet) + (6S)-5,6,7,8-tetrahydrofolate + H(+). Functionally, attaches a formyl group to the free amino group of methionyl-tRNA(fMet). The formyl group appears to play a dual role in the initiator identity of N-formylmethionyl-tRNA by promoting its recognition by IF2 and preventing the misappropriation of this tRNA by the elongation apparatus. In Cyanothece sp. (strain PCC 7425 / ATCC 29141), this protein is Methionyl-tRNA formyltransferase.